Consider the following 340-residue polypeptide: Deubiquitinase SseL (340 aa).

Residue His-223 is part of the active site. Residue Cys-285 is the Nucleophile of the active site.

Belongs to the peptidase C79 family.

It localises to the secreted. It is found in the host cytoplasm. Its function is as follows. Effector proteins function to alter host cell physiology and promote bacterial survival in host tissues. This protease targets the host cell ubiquitin pathway by acting as a deubiquitinase in infected host cells. This Salmonella paratyphi B (strain ATCC BAA-1250 / SPB7) protein is Deubiquitinase SseL (sseL).